A 77-amino-acid chain; its full sequence is MSEEQLKAFIAKVQADTSLQEQLKAEGADVVAIAKAAGFTITTEDLNSHRQNLTDDELEGVAGGTASGGCDTSMFCY.

Positions 1–64 (MSEEQLKAFI…DDELEGVAGG (64 aa)) are excised as a propeptide. At Thr65 the chain carries 2,3-didehydrobutyrine. The segment at residues 67–70 (SGGC) is a cross-link (lanthionine (Ser-Cys)). The beta-methyllanthionine (Thr-Cys) cross-link spans 72 to 76 (TSMFC).

Cross-links are proved in vitro, when coepressed in E.coli with the ProcM lanthionine synthetase. Post-translationally, the lanthionine residue has both a DL configuration (with 2S,6R stereochemistry) and a LL configuration (with 2R,6R stereochemistry). DL and LL diastomers have a 4:1 ratio. It is unknown whether nonenzymatic cyclization occur, but authors favor a model in which ProcM does generate all thioether cross-links. The beta-methyllanthionine residue has a DL configuration (with 2S,3S,6R stereochemistry). In terms of processing, maturation of prochlorosin involves the enzymatic conversion of Thr, and Ser into dehydrated AA and the formation of thioether bonds with cysteines. This is followed by membrane translocation and cleavage of the modified precursor.

The protein resides in the secreted. In terms of biological role, lanthionine-containing peptide (lantipeptide) with unknown function. Does not show antibiotic activity against Lactococcus lactis 117 and Bacillus subtilis 6633 bacteria. Organisms that produce this peptide live in oligotrophic environments at very dilute concentrations, suggesting this peptide is not secreted to influence other bacteria. The chain is Lantipeptide prochlorosin 4.3 from Prochlorococcus marinus (strain MIT 9313).